Here is a 197-residue protein sequence, read N- to C-terminus: Ycf20-like protein (197 aa).

The next 3 helical transmembrane spans lie at 113 to 133, 138 to 158, and 173 to 193; these read MKIF…TILG, WDVL…MLMY, and FVVF…VDAF.

The protein belongs to the ycf20 family.

The protein localises to the membrane. The chain is Ycf20-like protein from Arabidopsis thaliana (Mouse-ear cress).